We begin with the raw amino-acid sequence, 249 residues long: Vitamin B12 import ATP-binding protein BtuD (249 aa).

In terms of domain architecture, ABC transporter spans 5 to 233 (MQLQDVAETT…PNLAQAYGMN (229 aa)). 33–40 (GPNGAGKS) lines the ATP pocket.

This sequence belongs to the ABC transporter superfamily. Vitamin B12 importer (TC 3.A.1.13.1) family. As to quaternary structure, the complex is composed of two ATP-binding proteins (BtuD), two transmembrane proteins (BtuC) and a solute-binding protein (BtuF).

Its subcellular location is the cell inner membrane. The catalysed reaction is an R-cob(III)alamin(out) + ATP + H2O = an R-cob(III)alamin(in) + ADP + phosphate + H(+). Its function is as follows. Part of the ABC transporter complex BtuCDF involved in vitamin B12 import. Responsible for energy coupling to the transport system. The polypeptide is Vitamin B12 import ATP-binding protein BtuD (Citrobacter koseri (strain ATCC BAA-895 / CDC 4225-83 / SGSC4696)).